The sequence spans 183 residues: UPF0316 protein GTNG_0803 (183 aa).

Transmembrane regions (helical) follow at residues 5-25, 33-53, and 59-79; these read IVLV…RTIF, LAAF…SIVF, and YIVM…LEDI.

The protein belongs to the UPF0316 family.

The protein resides in the cell membrane. In Geobacillus thermodenitrificans (strain NG80-2), this protein is UPF0316 protein GTNG_0803.